The chain runs to 264 residues: Low molecular mass lipoprotein PBMHP-12 (264 aa).

An N-terminal signal peptide occupies residues 1-16 (MKLLVVFAMCVPAASA).

Belongs to the 30 kDa lipoprotein family.

Its subcellular location is the secreted. The protein is Low molecular mass lipoprotein PBMHP-12 of Bombyx mori (Silk moth).